Here is a 281-residue protein sequence, read N- to C-terminus: BURP domain-containing protein BNM2C (281 aa).

Residues 1-25 form the signal peptide; it reads MASLRFSVTFPALFSLLLSLWVVDA. The region spanning 59–281 is the BURP domain; that stretch reads FFKISDLKLG…PLDNIVWVSK (223 aa).

In terms of tissue distribution, expressed in the radicle of germinating seeds 2 days post-imbibition (DPI) and in roots of 30-DPI young plants. Expressed in the embryo and seed coat tissues of developing seeds. The protein accumulates only in seeds and only long after transcript accumulation becomes evident.

The protein localises to the protein storage vacuole. This Brassica napus (Rape) protein is BURP domain-containing protein BNM2C.